The primary structure comprises 394 residues: G2/mitotic-specific cyclin-B2 (394 aa).

This sequence belongs to the cyclin family. Cyclin AB subfamily. Interacts with the CDK1 protein kinase to form a serine/threonine kinase holoenzyme complex also known as maturation promoting factor (MPF). The cyclin subunit imparts substrate specificity to the complex.

Essential for the control of the cell cycle at the G2/M (mitosis) transition. The protein is G2/mitotic-specific cyclin-B2 (ccnb2) of Anguilla japonica (Japanese eel).